The sequence spans 488 residues: Bifunctional protein GlmU (488 aa).

Residues 1–237 form a pyrophosphorylase region; that stretch reads MPRTRTPLAA…AEEASGVNDR (237 aa). UDP-N-acetyl-alpha-D-glucosamine-binding positions include 13–16, Lys-27, Gln-82, 87–88, 110–112, Gly-149, Glu-164, Asn-179, and Asn-235; these read LAAG, GT, and SGD. Residue Asp-112 participates in Mg(2+) binding. Asn-235 is a Mg(2+) binding site. The interval 238-258 is linker; that stretch reads VELSRANRVMVGRLAEAFMRA. An N-acetyltransferase region spans residues 259-488; it reads GVTIEDPARF…KGRPAARRAS (230 aa). UDP-N-acetyl-alpha-D-glucosamine-binding residues include Arg-341 and Lys-359. Catalysis depends on His-371, which acts as the Proton acceptor. UDP-N-acetyl-alpha-D-glucosamine is bound by residues Tyr-374 and Asn-385. Acetyl-CoA-binding positions include Ala-388, 394-395, Ser-413, Ala-431, and Arg-448; that span reads NY. The interval 459 to 488 is disordered; it reads AQRQAEKQMKGTATGPASARKGRPAARRAS. The segment covering 478–488 has biased composition (basic residues); the sequence is RKGRPAARRAS.

This sequence in the N-terminal section; belongs to the N-acetylglucosamine-1-phosphate uridyltransferase family. The protein in the C-terminal section; belongs to the transferase hexapeptide repeat family. Homotrimer. Requires Mg(2+) as cofactor.

It is found in the cytoplasm. The enzyme catalyses alpha-D-glucosamine 1-phosphate + acetyl-CoA = N-acetyl-alpha-D-glucosamine 1-phosphate + CoA + H(+). It carries out the reaction N-acetyl-alpha-D-glucosamine 1-phosphate + UTP + H(+) = UDP-N-acetyl-alpha-D-glucosamine + diphosphate. Its pathway is nucleotide-sugar biosynthesis; UDP-N-acetyl-alpha-D-glucosamine biosynthesis; N-acetyl-alpha-D-glucosamine 1-phosphate from alpha-D-glucosamine 6-phosphate (route II): step 2/2. It participates in nucleotide-sugar biosynthesis; UDP-N-acetyl-alpha-D-glucosamine biosynthesis; UDP-N-acetyl-alpha-D-glucosamine from N-acetyl-alpha-D-glucosamine 1-phosphate: step 1/1. The protein operates within bacterial outer membrane biogenesis; LPS lipid A biosynthesis. Its function is as follows. Catalyzes the last two sequential reactions in the de novo biosynthetic pathway for UDP-N-acetylglucosamine (UDP-GlcNAc). The C-terminal domain catalyzes the transfer of acetyl group from acetyl coenzyme A to glucosamine-1-phosphate (GlcN-1-P) to produce N-acetylglucosamine-1-phosphate (GlcNAc-1-P), which is converted into UDP-GlcNAc by the transfer of uridine 5-monophosphate (from uridine 5-triphosphate), a reaction catalyzed by the N-terminal domain. This chain is Bifunctional protein GlmU, found in Anaeromyxobacter dehalogenans (strain 2CP-1 / ATCC BAA-258).